We begin with the raw amino-acid sequence, 848 residues long: Protein SEY1 (848 aa).

Residues 1 to 733 lie on the Cytoplasmic side of the membrane; the sequence is MNGNFAAVGS…KRGALGGMTQ (733 aa). Residues 47 to 277 form the GB1/RHD3-type G domain; it reads GFNYHLISVF…FVGGVFLPEY (231 aa). 57–64 is a GTP binding site; sequence GSQSTGKS. Residues 734–754 traverse the membrane as a helical segment; the sequence is VPLYFWIALFAFGWNEIWMVI. At 755 to 757 the chain is on the lumenal side; that stretch reads RNP. A helical transmembrane segment spans residues 758-778; sequence FLFILLLLSAGGTYVAYNLSL. Residues 779-848 lie on the Cytoplasmic side of the membrane; sequence LGPMMQMTNA…KKKDYDDDGI (70 aa). A disordered region spans residues 815–848; sequence LAMPASSKSSGGEQVRMDTLDSKGKKKDYDDDGI. The segment covering 829-848 has biased composition (basic and acidic residues); it reads VRMDTLDSKGKKKDYDDDGI.

This sequence belongs to the TRAFAC class dynamin-like GTPase superfamily. GB1/RHD3 GTPase family. RHD3 subfamily.

The protein resides in the endoplasmic reticulum membrane. Functionally, cooperates with the reticulon proteins and tubule-shaping DP1 family proteins to generate and maintain the structure of the tubular endoplasmic reticulum network. Has GTPase activity, which is required for its function in ER organization. The sequence is that of Protein SEY1 from Pyricularia oryzae (strain 70-15 / ATCC MYA-4617 / FGSC 8958) (Rice blast fungus).